The primary structure comprises 156 residues: ATP synthase subunit b (156 aa).

The helical transmembrane segment at 7 to 27 (LIGQTVAFIIFVWFCMKFVWP) threads the bilayer.

The protein belongs to the ATPase B chain family. F-type ATPases have 2 components, F(1) - the catalytic core - and F(0) - the membrane proton channel. F(1) has five subunits: alpha(3), beta(3), gamma(1), delta(1), epsilon(1). F(0) has three main subunits: a(1), b(2) and c(10-14). The alpha and beta chains form an alternating ring which encloses part of the gamma chain. F(1) is attached to F(0) by a central stalk formed by the gamma and epsilon chains, while a peripheral stalk is formed by the delta and b chains.

Its subcellular location is the cell inner membrane. Functionally, f(1)F(0) ATP synthase produces ATP from ADP in the presence of a proton or sodium gradient. F-type ATPases consist of two structural domains, F(1) containing the extramembraneous catalytic core and F(0) containing the membrane proton channel, linked together by a central stalk and a peripheral stalk. During catalysis, ATP synthesis in the catalytic domain of F(1) is coupled via a rotary mechanism of the central stalk subunits to proton translocation. In terms of biological role, component of the F(0) channel, it forms part of the peripheral stalk, linking F(1) to F(0). This is ATP synthase subunit b from Shewanella sp. (strain MR-4).